The primary structure comprises 209 residues: Imidazoleglycerol-phosphate dehydratase (209 aa).

This sequence belongs to the imidazoleglycerol-phosphate dehydratase family.

The protein resides in the cytoplasm. It catalyses the reaction D-erythro-1-(imidazol-4-yl)glycerol 3-phosphate = 3-(imidazol-4-yl)-2-oxopropyl phosphate + H2O. Its pathway is amino-acid biosynthesis; L-histidine biosynthesis; L-histidine from 5-phospho-alpha-D-ribose 1-diphosphate: step 6/9. This Microcystis aeruginosa (strain NIES-843 / IAM M-2473) protein is Imidazoleglycerol-phosphate dehydratase.